Reading from the N-terminus, the 177-residue chain is Large ribosomal subunit protein uL6 (177 aa).

This sequence belongs to the universal ribosomal protein uL6 family. Part of the 50S ribosomal subunit.

In terms of biological role, this protein binds to the 23S rRNA, and is important in its secondary structure. It is located near the subunit interface in the base of the L7/L12 stalk, and near the tRNA binding site of the peptidyltransferase center. This chain is Large ribosomal subunit protein uL6, found in Rubrobacter xylanophilus (strain DSM 9941 / JCM 11954 / NBRC 16129 / PRD-1).